Reading from the N-terminus, the 216-residue chain is Probable GTP-binding protein EngB (216 aa).

The 185-residue stretch at 26-210 folds into the EngB-type G domain; the sequence is PMATIIFAGR…KNRIFEVIRE (185 aa). GTP contacts are provided by residues 34–41, 59–63, 76–79, 156–159, and 189–191; these read GRSNVGKS, GVTRK, DMPG, NKLD, and ISA. 2 residues coordinate Mg(2+): serine 41 and threonine 61.

This sequence belongs to the TRAFAC class TrmE-Era-EngA-EngB-Septin-like GTPase superfamily. EngB GTPase family. The cofactor is Mg(2+).

Necessary for normal cell division and for the maintenance of normal septation. The sequence is that of Probable GTP-binding protein EngB from Pyrococcus horikoshii (strain ATCC 700860 / DSM 12428 / JCM 9974 / NBRC 100139 / OT-3).